Reading from the N-terminus, the 299-residue chain is Oxygen-dependent coproporphyrinogen-III oxidase (299 aa).

A substrate-binding site is contributed by S92. The Mn(2+) site is built by H96 and H106. The Proton donor role is filled by H106. 108–110 (NVR) contributes to the substrate binding site. Residues H145 and H175 each coordinate Mn(2+). The segment at 240-275 (YVEFNLVWDRGTLFGLQTGGRTESILMSMPPLVRWE) is important for dimerization. Residue 258-260 (GGR) coordinates substrate.

The protein belongs to the aerobic coproporphyrinogen-III oxidase family. In terms of assembly, homodimer. It depends on Mn(2+) as a cofactor.

The protein localises to the cytoplasm. It carries out the reaction coproporphyrinogen III + O2 + 2 H(+) = protoporphyrinogen IX + 2 CO2 + 2 H2O. The protein operates within porphyrin-containing compound metabolism; protoporphyrin-IX biosynthesis; protoporphyrinogen-IX from coproporphyrinogen-III (O2 route): step 1/1. Its function is as follows. Involved in the heme biosynthesis. Catalyzes the aerobic oxidative decarboxylation of propionate groups of rings A and B of coproporphyrinogen-III to yield the vinyl groups in protoporphyrinogen-IX. The polypeptide is Oxygen-dependent coproporphyrinogen-III oxidase (Escherichia coli O8 (strain IAI1)).